The following is a 335-amino-acid chain: Fructose-1,6-bisphosphatase class 1 (335 aa).

Glutamate 94, aspartate 113, leucine 115, and aspartate 116 together coordinate Mg(2+). Substrate contacts are provided by residues 116-119 (DGSS), asparagine 208, and lysine 274. Glutamate 280 lines the Mg(2+) pocket.

The protein belongs to the FBPase class 1 family. In terms of assembly, homotetramer. The cofactor is Mg(2+).

The protein resides in the cytoplasm. The catalysed reaction is beta-D-fructose 1,6-bisphosphate + H2O = beta-D-fructose 6-phosphate + phosphate. It functions in the pathway carbohydrate biosynthesis; gluconeogenesis. This Polynucleobacter asymbioticus (strain DSM 18221 / CIP 109841 / QLW-P1DMWA-1) (Polynucleobacter necessarius subsp. asymbioticus) protein is Fructose-1,6-bisphosphatase class 1.